The primary structure comprises 433 residues: N-lysine methyltransferase SMYD2 (433 aa).

The 235-residue stretch at 7 to 241 (GGLERFCSPG…PGEEVFTSYI (235 aa)) folds into the SET domain. 17–19 (KGR) is a binding site for S-adenosyl-L-methionine. Positions 52, 55, 65, 68, 74, 78, 86, and 90 each coordinate Zn(2+). Residues 52–90 (CEFCFARKEGLSKCGRCKQAFYCNVECQKEDWPMHKLEC) form an MYND-type zinc finger. S-adenosyl-L-methionine contacts are provided by residues His-137, 206–207 (NH), and 258–260 (YFF).

Belongs to the class V-like SAM-binding methyltransferase superfamily. Interacts with RNA polymerase II and HELZ. Interacts with SIN3A and HDAC1. Interacts (via MYND-type zinc finger) with EPB41L3. Interacts (via SET domain) with p53/TP53. Interacts with RB1 and HSP90AA1.

The protein localises to the cytoplasm. It is found in the cytosol. The protein resides in the nucleus. It catalyses the reaction L-lysyl(4)-[histone H3] + 3 S-adenosyl-L-methionine = N(6),N(6),N(6)-trimethyl-L-lysyl(4)-[histone H3] + 3 S-adenosyl-L-homocysteine + 3 H(+). It carries out the reaction L-lysyl-[protein] + S-adenosyl-L-methionine = N(6)-methyl-L-lysyl-[protein] + S-adenosyl-L-homocysteine + H(+). Its function is as follows. Protein-lysine N-methyltransferase that methylates both histones and non-histone proteins, including p53/TP53 and RB1. Specifically trimethylates histone H3 'Lys-4' (H3K4me3) in vivo. The activity requires interaction with HSP90alpha. Shows even higher methyltransferase activity on p53/TP53. Monomethylates 'Lys-370' of p53/TP53, leading to decreased DNA-binding activity and subsequent transcriptional regulation activity of p53/TP53. Monomethylates RB1 at 'Lys-860'. The sequence is that of N-lysine methyltransferase SMYD2 (SMYD2) from Sus scrofa (Pig).